Here is a 219-residue protein sequence, read N- to C-terminus: Lipid transferase CIDEB (219 aa).

Phosphothreonine is present on T18. Residues P34–P110 form the CIDE-N domain.

It belongs to the CIDE family. Interacts with DFFA. Interacts with DFFB; inhibited by DFFB. Interacts with APOB. Interacts with PREB/SEC12; facilitating loading of SCAP-SREBP into COPII vesicles. As to expression, highly enriched in the liver.

The protein resides in the lipid droplet. The protein localises to the endoplasmic reticulum membrane. Its subcellular location is the golgi apparatus. It is found in the cytoplasmic vesicle. It localises to the COPI-coated vesicle. In terms of biological role, lipid transferase specifically expressed in hepatocytes, which promotes unilocular lipid droplet formation by mediating lipid droplet fusion. Lipid droplet fusion promotes their enlargement, restricting lipolysis and favoring lipid storage. Localizes on the lipid droplet surface, at focal contact sites between lipid droplets, and mediates atypical lipid droplet fusion by promoting directional net neutral lipid transfer from the smaller to larger lipid droplets. The transfer direction may be driven by the internal pressure difference between the contacting lipid droplet pair. Promotes lipid exchange and lipid droplet fusion in both small and large lipid droplet-containing hepatocytes. In addition to its role in lipid droplet fusion, also involved in cytoplasmic vesicle biogenesis and transport. Required for very-low-density lipoprotein (VLDL) lipidation and maturation. Probably involved in the biogenesis of VLDL transport vesicles by forming a COPII vesicle coat and facilitating the formation of endoplasmic reticulum-derived large vesicles. Also involved in sterol-regulated export of the SCAP-SREBP complex, composed of SCAP, SREBF1/SREBP1 and SREBF2/SREBP2, by promoting loading of SCAP-SREBP into COPII vesicles. May also activate apoptosis. The polypeptide is Lipid transferase CIDEB (Mus musculus (Mouse)).